The sequence spans 860 residues: Leucine--tRNA ligase (860 aa).

A 'HIGH' region motif is present at residues 42–52 (PYPSGRLHMGH). The 'KMSKS' region motif lies at 619–623 (KMSKS). Lys-622 is a binding site for ATP.

The protein belongs to the class-I aminoacyl-tRNA synthetase family.

The protein resides in the cytoplasm. The enzyme catalyses tRNA(Leu) + L-leucine + ATP = L-leucyl-tRNA(Leu) + AMP + diphosphate. The chain is Leucine--tRNA ligase from Cronobacter sakazakii (strain ATCC BAA-894) (Enterobacter sakazakii).